The following is a 352-amino-acid chain: Respiratory nitrate reductase subunit beta (352 aa).

In terms of domain architecture, 4Fe-4S ferredoxin-type 1 spans 20–48; that stretch reads VAMVMDLNKCIGCQTCTVACKSLWTEGGG. [4Fe-4S] cluster contacts are provided by Cys29, Cys32, Cys35, and Cys39. Disordered stretches follow at residues 63 to 95 and 111 to 131; these read KGYP…KEDY and SDRP…DEDQ. The span at 78 to 95 shows a compositional bias: basic and acidic residues; sequence SSEHKERKPGQIPDKEDY. 4Fe-4S ferredoxin-type domains follow at residues 139 to 170 and 172 to 201; these read SYYF…KREE and GIVL…YNAT. 3 residues coordinate [4Fe-4S] cluster: Cys148, Cys151, and Cys156. [3Fe-4S] cluster is bound by residues Cys160, Cys181, and Cys187. [4Fe-4S] cluster is bound by residues Cys191, Cys208, Cys211, Cys229, and Cys233.

In terms of assembly, probable multiprotein complex; a catalytic heterodimer of an alpha and beta chain is proposed to associate with additional subunits involved in membrane attachment and electron transfer. The cofactor is [4Fe-4S] cluster. [3Fe-4S] cluster serves as cofactor.

It localises to the cell membrane. The catalysed reaction is nitrate + a quinol = a quinone + nitrite + H2O. With respect to regulation, inhibited by cyanide, azide and antimycin A. Enzyme stability is not dependent on salt concentration. Functionally, the respiratory membrane-bound nitrate reductase enzyme complex plays a role in generation of metabolic energy by using nitrate as a terminal electron acceptor during anaerobic conditions. The beta chain is an electron transfer unit containing four cysteine clusters involved in the formation of iron-sulfur centers. This Haloferax mediterranei (strain ATCC 33500 / DSM 1411 / JCM 8866 / NBRC 14739 / NCIMB 2177 / R-4) (Halobacterium mediterranei) protein is Respiratory nitrate reductase subunit beta (narH).